The primary structure comprises 147 residues: UPF0735 ACT domain-containing protein GTNG_2535 (147 aa).

The ACT domain occupies 69-144 (TLFFHLEDRS…FVEKVEIVGS (76 aa)).

This sequence belongs to the UPF0735 family.

The polypeptide is UPF0735 ACT domain-containing protein GTNG_2535 (Geobacillus thermodenitrificans (strain NG80-2)).